Reading from the N-terminus, the 63-residue chain is Alpha-conotoxin-like PuSG1.1 (63 aa).

The N-terminal stretch at 1–21 (MRCLAFLVVTLLLFTATATTG) is a signal peptide. A propeptide spanning residues 22–43 (ASNGMNAAASGEAPDSISLAVR) is cleaved from the precursor. Cystine bridges form between C46–C52 and C47–C60. Positions 48–50 (PDP) are lacks the Ser-Xaa-Pro motif that is crucial for potent interaction with nAChR.

Belongs to the conotoxin A superfamily. As to expression, expressed by the salivary gland.

It is found in the secreted. Functionally, alpha-conopeptides-like may act on postsynaptic membranes, they bind to the nicotinic acetylcholine receptors (nAChR) and thus inhibit them. Has possibly a distinct nAChR binding mode from other alpha-conotoxins, due to a different three residue motif (lacks the Ser-Xaa-Pro motif). The chain is Alpha-conotoxin-like PuSG1.1 from Conus pulicarius (Flea-bitten cone).